The following is a 179-amino-acid chain: MGCCTGRCTLVFICTLQMLVALERQIFDFLGYQWAPILGNFLHIIVVILGLFGTIQYRPRYIVAYTIWTAFWVAWNVFIICFYLEVGGLSKDTDLMTFNISIHRSWWREHGPGCVWRLVPAPPSKNLGDHSFISVTGCIIEYQYLEVIHSAVQILLSLIGFVYACYVISVITDEEDSST.

A run of 4 helical transmembrane segments spans residues 5–22, 35–55, 62–82, and 151–171; these read TGRC…LVAL, APIL…FGTI, IVAY…IICF, and AVQI…ISVI.

It belongs to the NKAIN family. Interacts with atp1b1 C-terminus.

Its subcellular location is the cell membrane. This is Sodium/potassium-transporting ATPase subunit beta-1-interacting protein 3 (nkain3) from Xenopus laevis (African clawed frog).